A 100-amino-acid chain; its full sequence is Small ribosomal subunit protein uS14c (100 aa).

Residues 1-31 are disordered; sequence MARKSLIQREKKRQKLEQKYHSIRRSSKKEI.

The protein belongs to the universal ribosomal protein uS14 family. Part of the 30S ribosomal subunit.

Its subcellular location is the plastid. It is found in the chloroplast. In terms of biological role, binds 16S rRNA, required for the assembly of 30S particles. The protein is Small ribosomal subunit protein uS14c of Nicotiana tomentosiformis (Tobacco).